The sequence spans 375 residues: Odorant receptor 10 (375 aa).

The next 6 membrane-spanning stretches (helical) occupy residues 32 to 52 (ISII…GHSW), 58 to 78 (VIIK…TLIL), 125 to 145 (NLAL…FTGV), 167 to 187 (IIYL…IPFT), 250 to 270 (YICF…LFLL), and 279 to 299 (IVIV…FYWH).

The protein belongs to the insect chemoreceptor superfamily. Heteromeric odorant receptor channel (TC 1.A.69) family. In terms of tissue distribution, expressed in female antenna, maxillary palp and proboscis. Expressed in female body. Expressed in male tissues.

The protein localises to the cell membrane. In terms of biological role, odorant receptor which complexes with Orco, a coreceptor, to form odorant-sensing units, providing sensitive and prolonged odorant signaling and calcium permeability. Can sense indole, 1-octen-3-ol, 3-methyindole and an insect repellent DEET. This Aedes albopictus (Asian tiger mosquito) protein is Odorant receptor 10.